The sequence spans 592 residues: Inactive metallocarboxypeptidase ecm14 (592 aa).

Positions 1 to 22 (MYRQDHVFVVLCAVLLAGQVTA) are cleaved as a signal peptide. The propeptide occupies 23-175 (VPAGTGINPH…AIYESRYPTR (153 aa)). One can recognise a Peptidase M14 domain in the interval 203–524 (HYQPFNVILQ…NSVLVLGHFL (322 aa)). Zn(2+) is bound by residues H267 and E270. Substrate is bound by residues 267-270 (HARE), R325, and 342-343 (DR). Residues C336 and C359 are joined by a disulfide bond. N383 is a glycosylation site (N-linked (GlcNAc...) asparagine). Residue H399 coordinates Zn(2+). 400 to 401 (SY) is a binding site for substrate. N-linked (GlcNAc...) asparagine glycosylation is present at N548.

It belongs to the peptidase M14 family. It depends on Zn(2+) as a cofactor.

It is found in the vacuole. The protein localises to the secreted. Its function is as follows. Inactive carboxypeptidase that may play a role in cell wall organization and biogenesis. This is Inactive metallocarboxypeptidase ecm14 (ecm14) from Talaromyces stipitatus (strain ATCC 10500 / CBS 375.48 / QM 6759 / NRRL 1006) (Penicillium stipitatum).